The primary structure comprises 160 residues: Transcriptional repressor NrdR (160 aa).

A zinc finger spans residues 3–34; it reads CPACNYNGTKVLDSRPVQDFGSIRRRRECESC. The region spanning 49 to 139 is the ATP-cone domain; the sequence is LIIVKKDGTR…VYKQFKDINV (91 aa).

The protein belongs to the NrdR family. Zn(2+) serves as cofactor.

Negatively regulates transcription of bacterial ribonucleotide reductase nrd genes and operons by binding to NrdR-boxes. This chain is Transcriptional repressor NrdR, found in Exiguobacterium sibiricum (strain DSM 17290 / CCUG 55495 / CIP 109462 / JCM 13490 / 255-15).